Consider the following 411-residue polypeptide: 1-deoxy-D-xylulose 5-phosphate reductoisomerase (411 aa).

Threonine 23, glycine 24, serine 25, isoleucine 26, glycine 49, arginine 50, asparagine 51, and asparagine 137 together coordinate NADPH. A 1-deoxy-D-xylulose 5-phosphate-binding site is contributed by lysine 138. An NADPH-binding site is contributed by glutamate 139. Aspartate 163 contacts Mn(2+). 1-deoxy-D-xylulose 5-phosphate-binding residues include serine 164, glutamate 165, serine 199, and histidine 222. Glutamate 165 serves as a coordination point for Mn(2+). Residue glycine 228 coordinates NADPH. Serine 235, asparagine 240, lysine 241, and glutamate 244 together coordinate 1-deoxy-D-xylulose 5-phosphate. Glutamate 244 is a Mn(2+) binding site.

The protein belongs to the DXR family. Mg(2+) is required as a cofactor. Mn(2+) serves as cofactor.

The catalysed reaction is 2-C-methyl-D-erythritol 4-phosphate + NADP(+) = 1-deoxy-D-xylulose 5-phosphate + NADPH + H(+). The protein operates within isoprenoid biosynthesis; isopentenyl diphosphate biosynthesis via DXP pathway; isopentenyl diphosphate from 1-deoxy-D-xylulose 5-phosphate: step 1/6. In terms of biological role, catalyzes the NADPH-dependent rearrangement and reduction of 1-deoxy-D-xylulose-5-phosphate (DXP) to 2-C-methyl-D-erythritol 4-phosphate (MEP). This chain is 1-deoxy-D-xylulose 5-phosphate reductoisomerase, found in Mannheimia succiniciproducens (strain KCTC 0769BP / MBEL55E).